The following is a 357-amino-acid chain: MKKNIMGLSLFSSAGIGEYFLSRVGIDIIVANELIKKRADLYQKIYPNHKMVIGDIRDQRIFNKVLNIALTNQVDFLIASPPCQGMSVAGKNRDVSNMANDNRNYLIMYVIAMIKKLKPAYILIENVPFLLKLELYIDNKLTPIKNILEDEFGSEYHIHFDILDAADYGTPQRRKRAIIRLNKKGTIWNLPLKQNIVSVEQAIGNLPSIESGKHSGLKWHYGRGHTEQQIEWMKHTPTGKSAFENLVHYPRKANGEKVKGYHSSYRRIRWDEPAPTITIRNDAISSQRNVHPGRPLLDGTYSDARVLSVLELMRLTGLPDNWEIPDDTPEILIRQIIGECIPPLLIENITREIFNEN.

One can recognise an SAM-dependent MTase C5-type domain in the interval 5-357 (IMGLSLFSSA…NITREIFNEN (353 aa)). Cysteine 83 is a catalytic residue.

It belongs to the class I-like SAM-binding methyltransferase superfamily. C5-methyltransferase family.

It catalyses the reaction a 2'-deoxycytidine in DNA + S-adenosyl-L-methionine = a 5-methyl-2'-deoxycytidine in DNA + S-adenosyl-L-homocysteine + H(+). Functionally, a methylase that recognizes DNA with the sequence 5'-GCGTC-3', methylates C-2, and protects the DNA from cleavage by the HgaI endonuclease. The chain is Type II methyltransferase M1.HgaI (hgaIAM) from Avibacterium volantium (Pasteurella volantium).